Reading from the N-terminus, the 198-residue chain is uncharacterized protein (198 aa).

The N-terminal stretch at 1–28 (MHPTQRKLMKRIILFLSLLFCIACPAIA) is a signal peptide.

The protein belongs to the fimbrial protein family.

It localises to the fimbrium. Part of the yadCKLM-htrE-yadVN fimbrial operon. Could contribute to adhesion to various surfaces in specific environmental niches. This is an uncharacterized protein from Escherichia coli (strain K12).